Reading from the N-terminus, the 552-residue chain is Membrane protein insertase YidC (552 aa).

5 helical membrane-spanning segments follow: residues V7 to Q24, W364 to A384, L434 to V454, P473 to P493, and P508 to V528.

The protein belongs to the OXA1/ALB3/YidC family. Type 1 subfamily. Interacts with the Sec translocase complex via SecD. Specifically interacts with transmembrane segments of nascent integral membrane proteins during membrane integration.

Its subcellular location is the cell inner membrane. Its function is as follows. Required for the insertion and/or proper folding and/or complex formation of integral membrane proteins into the membrane. Involved in integration of membrane proteins that insert both dependently and independently of the Sec translocase complex, as well as at least some lipoproteins. Aids folding of multispanning membrane proteins. The sequence is that of Membrane protein insertase YidC from Burkholderia cenocepacia (strain ATCC BAA-245 / DSM 16553 / LMG 16656 / NCTC 13227 / J2315 / CF5610) (Burkholderia cepacia (strain J2315)).